A 371-amino-acid chain; its full sequence is Peptidyl-prolyl cis-trans isomerase D (371 aa).

Residues phenylalanine 8–glutamine 172 form the PPIase cyclophilin-type domain. The disordered stretch occupies residues serine 175–leucine 202. The segment covering aspartate 189–glutamate 201 has biased composition (acidic residues). TPR repeat units follow at residues alanine 212–histidine 245, alanine 265–serine 303, and alanine 308–aspartate 341.

This sequence belongs to the cyclophilin-type PPIase family. PPIase D subfamily.

Its subcellular location is the cytoplasm. The catalysed reaction is [protein]-peptidylproline (omega=180) = [protein]-peptidylproline (omega=0). Its function is as follows. PPIases accelerate the folding of proteins. It catalyzes the cis-trans isomerization of proline imidic peptide bonds in oligopeptides. The chain is Peptidyl-prolyl cis-trans isomerase D (Cyp40) from Amanita muscaria (Fly agaric).